The following is a 119-amino-acid chain: Protein RALF-like 22 (119 aa).

An N-terminal signal peptide occupies residues 1–23; that stretch reads MTNTRAIYAVIAILAIVISAVES. Residues 24 to 70 constitute a propeptide, removed in mature form; sequence TGDFGDSLDFVRAGSSSLFSGCTGSIAECIAEEEEMEFDSDISRRIL. Cystine bridges form between Cys88/Cys98 and Cys111/Cys117.

This sequence belongs to the plant rapid alkalinization factor (RALF) family. Post-translationally, proteolytically cleaved, probably by S1P, a subtilisin-like serine protease (subtilase).

It localises to the secreted. Cell signaling peptide that may regulate plant stress, growth, and development. Mediates a rapid alkalinization of extracellular space by mediating a transient increase in the cytoplasmic Ca(2+) concentration leading to a calcium-dependent signaling events through a cell surface receptor and a concomitant activation of some intracellular mitogen-activated protein kinases. This is Protein RALF-like 22 (RALFL22) from Arabidopsis thaliana (Mouse-ear cress).